The primary structure comprises 284 residues: Elongation factor Ts (284 aa).

Residues 80 to 83 (TDFV) are involved in Mg(2+) ion dislocation from EF-Tu.

It belongs to the EF-Ts family.

The protein resides in the cytoplasm. Its function is as follows. Associates with the EF-Tu.GDP complex and induces the exchange of GDP to GTP. It remains bound to the aminoacyl-tRNA.EF-Tu.GTP complex up to the GTP hydrolysis stage on the ribosome. The protein is Elongation factor Ts of Neisseria gonorrhoeae (strain ATCC 700825 / FA 1090).